A 270-amino-acid chain; its full sequence is Myelin protein zero-like protein 1 (270 aa).

A signal peptide spans 1-35; the sequence is MAEAVGAVTLIAAPARRRWLWSALAAMLGLLTARI. Residues 36–151 form the Ig-like V-type domain; the sequence is SALEVHTPKE…DIVVRPGQIR (116 aa). At 36 to 162 the chain is on the extracellular side; sequence SALEVHTPKE…HVVEIDNLLV (127 aa). 2 N-linked (GlcNAc...) asparagine glycosylation sites follow: Asn-50 and Asn-130. A disulfide bond links Cys-58 and Cys-135. Residues 163–183 form a helical membrane-spanning segment; the sequence is FLVWVVVGTVTAVVLGLTLLI. Residues 184–270 are Cytoplasmic-facing; that stretch reads SLVLVVLYRR…SVVYADIRKD (87 aa). The tract at residues 201–257 is disordered; that stretch reads TGCSTSERLSPVKQAPRKCPSDTEGLVKSPPSAGSHQGPVIYAQLDHSGGHHSGKIN. 4 positions are modified to phosphoserine: Ser-204, Ser-206, Ser-210, and Ser-221. The ITIM motif 1 motif lies at 240–245; that stretch reads VIYAQL. Tyr-242 carries the post-translational modification Phosphotyrosine. Ser-261 is subject to Phosphoserine. Residues 262–267 carry the ITIM motif 2 motif; the sequence is VVYADI. Tyr-264 bears the Phosphotyrosine mark.

The protein belongs to the myelin P0 protein family. As to quaternary structure, interacts with phosphorylated PTPN11/SHP-2. Phosphorylated on tyrosine residues upon stimulation with pervanadate and concanavalin-A (ConA). Phosphorylation at Tyr-242 and Tyr-264 is required for interaction with PTPN11/SHP-2. Dephosphorylated by PTPN11/SHP-2 (in vitro). Post-translationally, N-glycosylated.

It localises to the membrane. Its function is as follows. Cell surface receptor, which is involved in signal transduction processes. Recruits PTPN11/SHP-2 to the cell membrane and is a putative substrate of PTPN11/SHP-2. Is a major receptor for concanavalin-A (ConA) and is involved in cellular signaling induced by ConA, which probably includes Src family tyrosine-protein kinases. May be involved in regulation of integrin-mediated cell motility. The polypeptide is Myelin protein zero-like protein 1 (Mpzl1) (Rattus norvegicus (Rat)).